We begin with the raw amino-acid sequence, 475 residues long: ESX-3 secretion system protein EccD3 (475 aa).

11 helical membrane-spanning segments follow: residues 132-152 (IARG…GLSV), 161-181 (LLGQ…ALAV), 186-206 (AVLA…AFAL), 212-232 (FGAP…LISM), 241-261 (IAVF…AGAA), 264-284 (WVIS…IVTV), 333-353 (GVIA…VSSA), 354-374 (NASP…ALRA), 384-404 (AWLL…FVIG), 409-429 (AALW…VAAL), and 453-473 (GLDA…SLVL).

It belongs to the EccD/Snm4 family. In terms of assembly, part of the ESX-3 / type VII secretion system (T7SS), which is composed of cytosolic and membrane components. The ESX-3 membrane complex is composed of EccB3, EccC3, EccD3 and EccE3.

Its subcellular location is the cell inner membrane. Functionally, part of the ESX-3 specialized secretion system, which is required for siderophore-mediated iron acquisition and for the secretion of EsxH and EsxG. This Mycolicibacterium smegmatis (strain ATCC 700084 / mc(2)155) (Mycobacterium smegmatis) protein is ESX-3 secretion system protein EccD3.